The primary structure comprises 167 residues: Interferon gamma (167 aa).

An N-terminal signal peptide occupies residues 1–23 (MNYTGYLLAFQLCIILGSSSCYC). Gln24 bears the Pyrrolidone carboxylic acid mark. Asn39 and Asn105 each carry an N-linked (GlcNAc...) asparagine glycan. Positions 148–167 (SNLRKRKRSQSTFHGRRASI) are disordered. Residues 149 to 167 (NLRKRKRSQSTFHGRRASI) are compositionally biased toward basic residues.

Belongs to the type II (or gamma) interferon family. As to quaternary structure, homodimer. Interacts with IFNGR1 (via extracellular domain); this interaction promotes IFNGR1 dimerization. As to expression, released primarily from activated T lymphocytes.

The protein localises to the secreted. In terms of biological role, type II interferon produced by immune cells such as T-cells and NK cells that plays crucial roles in antimicrobial, antiviral, and antitumor responses by activating effector immune cells and enhancing antigen presentation. Primarily signals through the JAK-STAT pathway after interaction with its receptor IFNGR1 to affect gene regulation. Upon IFNG binding, IFNGR1 intracellular domain opens out to allow association of downstream signaling components JAK2, JAK1 and STAT1, leading to STAT1 activation, nuclear translocation and transcription of IFNG-regulated genes. Many of the induced genes are transcription factors such as IRF1 that are able to further drive regulation of a next wave of transcription. Plays a role in class I antigen presentation pathway by inducing a replacement of catalytic proteasome subunits with immunoproteasome subunits. In turn, increases the quantity, quality, and repertoire of peptides for class I MHC loading. Increases the efficiency of peptide generation also by inducing the expression of activator PA28 that associates with the proteasome and alters its proteolytic cleavage preference. Up-regulates as well MHC II complexes on the cell surface by promoting expression of several key molecules such as cathepsins B/CTSB, H/CTSH, and L/CTSL. Participates in the regulation of hematopoietic stem cells during development and under homeostatic conditions by affecting their development, quiescence, and differentiation. The protein is Interferon gamma (IFNG) of Dasypus novemcinctus (Nine-banded armadillo).